We begin with the raw amino-acid sequence, 449 residues long: Probable glycine dehydrogenase (decarboxylating) subunit 1 (449 aa).

It belongs to the GcvP family. N-terminal subunit subfamily. As to quaternary structure, the glycine cleavage system is composed of four proteins: P, T, L and H. In this organism, the P 'protein' is a heterodimer of two subunits.

The catalysed reaction is N(6)-[(R)-lipoyl]-L-lysyl-[glycine-cleavage complex H protein] + glycine + H(+) = N(6)-[(R)-S(8)-aminomethyldihydrolipoyl]-L-lysyl-[glycine-cleavage complex H protein] + CO2. The glycine cleavage system catalyzes the degradation of glycine. The P protein binds the alpha-amino group of glycine through its pyridoxal phosphate cofactor; CO(2) is released and the remaining methylamine moiety is then transferred to the lipoamide cofactor of the H protein. This chain is Probable glycine dehydrogenase (decarboxylating) subunit 1, found in Pyrococcus abyssi (strain GE5 / Orsay).